Consider the following 349-residue polypeptide: MPRQLGELAAHVGGELLGDPSQLIHGLNGLEEAGPGDVSFYGNPRYRRQFEATRASAVLVGADVPPREGVALVRVANPHLAYAKLLRLFHAPERPAAGVRPGAWVHPEATVHPEAVLLPGASVDRGGRVGARTVLYPGAYVGEQAEVGEDCVLYPNVTVRERCIVGARVILHASSVVGADGFGFAFNPEGEAGPEHFKIPQVGIVRIEDDVEVGACTCIDRATVGETVVGRGAKLDNLVQIAHNVRVGPLSLICAQAGVSGSAEVGTGVVLAGQVGVVGHIRVGDLAKVGAQSGVAHDVPDGQVVSGSPAVPHREWLRASAAAGQMADLLKEVRALRRRVETLEKEKGP.

His-243 (proton acceptor) is an active-site residue.

This sequence belongs to the transferase hexapeptide repeat family. LpxD subfamily. As to quaternary structure, homotrimer.

The enzyme catalyses a UDP-3-O-[(3R)-3-hydroxyacyl]-alpha-D-glucosamine + a (3R)-hydroxyacyl-[ACP] = a UDP-2-N,3-O-bis[(3R)-3-hydroxyacyl]-alpha-D-glucosamine + holo-[ACP] + H(+). Its pathway is bacterial outer membrane biogenesis; LPS lipid A biosynthesis. Its function is as follows. Catalyzes the N-acylation of UDP-3-O-acylglucosamine using 3-hydroxyacyl-ACP as the acyl donor. Is involved in the biosynthesis of lipid A, a phosphorylated glycolipid that anchors the lipopolysaccharide to the outer membrane of the cell. The chain is UDP-3-O-acylglucosamine N-acyltransferase from Myxococcus xanthus (strain DK1622).